Consider the following 436-residue polypeptide: UDP-glucuronate 4-epimerase 5 (436 aa).

Transmembrane regions (helical) follow at residues 36-56 (LTLWASLFLALFLFYLVLSPP) and 95-115 (GLTVLVTGASGFVGTHVSIAL). Position 97–128 (97–128 (TVLVTGASGFVGTHVSIALRRRGDGVLGLDNF)) interacts with NAD(+). Y247 serves as the catalytic Proton acceptor.

Belongs to the NAD(P)-dependent epimerase/dehydratase family. As to quaternary structure, homodimer. In leaves, pollen and siliques, but not in roots or flowers.

It localises to the golgi apparatus. It is found in the golgi stack membrane. It catalyses the reaction UDP-alpha-D-glucuronate = UDP-alpha-D-galacturonate. Involved in the synthesis of the negatively charged monosaccharide that forms the backbone of pectic cell wall components. The sequence is that of UDP-glucuronate 4-epimerase 5 (GAE5) from Arabidopsis thaliana (Mouse-ear cress).